Consider the following 375-residue polypeptide: tRNA-specific 2-thiouridylase MnmA (375 aa).

ATP-binding positions include 13–20 (AMSGGVDS) and methionine 39. The active-site Nucleophile is cysteine 111. A disulfide bond links cysteine 111 and cysteine 208. Glycine 135 is a binding site for ATP. Residues 158–160 (KDQ) form an interaction with tRNA region. Catalysis depends on cysteine 208, which acts as the Cysteine persulfide intermediate. The segment at 313–314 (RY) is interaction with tRNA.

The protein belongs to the MnmA/TRMU family.

The protein localises to the cytoplasm. The enzyme catalyses S-sulfanyl-L-cysteinyl-[protein] + uridine(34) in tRNA + AH2 + ATP = 2-thiouridine(34) in tRNA + L-cysteinyl-[protein] + A + AMP + diphosphate + H(+). Catalyzes the 2-thiolation of uridine at the wobble position (U34) of tRNA, leading to the formation of s(2)U34. This is tRNA-specific 2-thiouridylase MnmA from Geotalea uraniireducens (strain Rf4) (Geobacter uraniireducens).